We begin with the raw amino-acid sequence, 246 residues long: Small ribosomal subunit protein uS2 (246 aa).

Belongs to the universal ribosomal protein uS2 family.

The sequence is that of Small ribosomal subunit protein uS2 from Saccharophagus degradans (strain 2-40 / ATCC 43961 / DSM 17024).